Reading from the N-terminus, the 275-residue chain is Large ribosomal subunit protein uL2 (275 aa).

2 disordered regions span residues 28–49 (APHAALVESQSRSGGRNHHGRI) and 224–246 (AMNPVDHPHGGGEAKAGQGNPHP).

Belongs to the universal ribosomal protein uL2 family. Part of the 50S ribosomal subunit. Forms a bridge to the 30S subunit in the 70S ribosome.

Its function is as follows. One of the primary rRNA binding proteins. Required for association of the 30S and 50S subunits to form the 70S ribosome, for tRNA binding and peptide bond formation. It has been suggested to have peptidyltransferase activity; this is somewhat controversial. Makes several contacts with the 16S rRNA in the 70S ribosome. The chain is Large ribosomal subunit protein uL2 from Stenotrophomonas maltophilia (strain R551-3).